Reading from the N-terminus, the 157-residue chain is Ribosome maturation factor RimP (157 aa).

It belongs to the RimP family.

The protein resides in the cytoplasm. Required for maturation of 30S ribosomal subunits. The protein is Ribosome maturation factor RimP of Bacillus licheniformis (strain ATCC 14580 / DSM 13 / JCM 2505 / CCUG 7422 / NBRC 12200 / NCIMB 9375 / NCTC 10341 / NRRL NRS-1264 / Gibson 46).